A 217-amino-acid chain; its full sequence is MGVKQTPPVQVKVSDADSTNRRKSSSQEGNPQLVQLKAKSDKDKRKGSSDSTASIMGSSNALPTKNLTTPPALNPLTTSISRGNTAYERSVNGSRITMHSNLAPTETQDVSWSEIDTLDDVKKMAKEPIVNDGFPRDFESNLTQMRKSHAQLLRLMRERNQRLKYAKLRSPPHKDQHNSATNKDQEPDEVLHDPEIALDGEKYVSQVVDTIKDVHRC.

2 disordered regions span residues 1–85 (MGVK…RGNT) and 167–189 (KLRS…EPDE). A compositionally biased stretch (basic and acidic residues) spans 38–48 (AKSDKDKRKGS). Residues 60–78 (NALPTKNLTTPPALNPLTT) are compositionally biased toward low complexity. A compositionally biased stretch (basic and acidic residues) spans 172-189 (PHKDQHNSATNKDQEPDE).

This is an uncharacterized protein from Saccharomyces cerevisiae (strain ATCC 204508 / S288c) (Baker's yeast).